The chain runs to 509 residues: Lanosterol 14-alpha demethylase (509 aa).

The chain crosses the membrane as a helical span at residues glycine 30 to phenylalanine 50. Heme is bound at residue cysteine 455.

This sequence belongs to the cytochrome P450 family. Heme is required as a cofactor. Post-translationally, ubiquitinated by MARCHF6, leading to proteasomal degradation.

The protein localises to the endoplasmic reticulum membrane. The protein resides in the microsome membrane. It catalyses the reaction a 14alpha-methyl steroid + 3 reduced [NADPH--hemoprotein reductase] + 3 O2 = a Delta(14) steroid + formate + 3 oxidized [NADPH--hemoprotein reductase] + 4 H2O + 4 H(+). The catalysed reaction is lanosterol + 3 reduced [NADPH--hemoprotein reductase] + 3 O2 = 4,4-dimethyl-5alpha-cholesta-8,14,24-trien-3beta-ol + formate + 3 oxidized [NADPH--hemoprotein reductase] + 4 H2O + 4 H(+). The enzyme catalyses 24,25-dihydrolanosterol + 3 reduced [NADPH--hemoprotein reductase] + 3 O2 = 4,4-dimethyl-8,14-cholestadien-3beta-ol + formate + 3 oxidized [NADPH--hemoprotein reductase] + 4 H2O + 4 H(+). It carries out the reaction a 14alpha-methyl steroid + reduced [NADPH--hemoprotein reductase] + O2 = a 14alpha-hydroxymethyl steroid + oxidized [NADPH--hemoprotein reductase] + H2O + H(+). It catalyses the reaction a 14alpha-hydroxymethyl steroid + reduced [NADPH--hemoprotein reductase] + O2 = a 14alpha-formyl steroid + oxidized [NADPH--hemoprotein reductase] + 2 H2O + H(+). The catalysed reaction is a 14alpha-formyl steroid + reduced [NADPH--hemoprotein reductase] + O2 = a Delta(14) steroid + formate + oxidized [NADPH--hemoprotein reductase] + H2O + 2 H(+). The enzyme catalyses lanosterol + reduced [NADPH--hemoprotein reductase] + O2 = 32-hydroxylanosterol + oxidized [NADPH--hemoprotein reductase] + H2O + H(+). It carries out the reaction 32-hydroxylanosterol + reduced [NADPH--hemoprotein reductase] + O2 = 32-oxolanosterol + oxidized [NADPH--hemoprotein reductase] + 2 H2O + H(+). It catalyses the reaction 32-oxolanosterol + reduced [NADPH--hemoprotein reductase] + O2 = 4,4-dimethyl-5alpha-cholesta-8,14,24-trien-3beta-ol + formate + oxidized [NADPH--hemoprotein reductase] + H2O + 2 H(+). The catalysed reaction is 24,25-dihydrolanosterol + reduced [NADPH--hemoprotein reductase] + O2 = 32-hydroxy-24,25-dihydrolanosterol + oxidized [NADPH--hemoprotein reductase] + H2O + H(+). The enzyme catalyses 32-hydroxy-24,25-dihydrolanosterol + reduced [NADPH--hemoprotein reductase] + O2 = 32-oxo-24,25-dihydrolanosterol + oxidized [NADPH--hemoprotein reductase] + 2 H2O + H(+). It carries out the reaction 32-oxo-24,25-dihydrolanosterol + reduced [NADPH--hemoprotein reductase] + O2 = 4,4-dimethyl-8,14-cholestadien-3beta-ol + formate + oxidized [NADPH--hemoprotein reductase] + H2O + 2 H(+). It functions in the pathway steroid biosynthesis; zymosterol biosynthesis; zymosterol from lanosterol: step 1/6. With respect to regulation, inhibited by azalanstat. Inhibited by azole antifungal agents ketoconazole, itraconazole and fluconazole. Sterol 14alpha-demethylase that plays a critical role in the cholesterol biosynthesis pathway, being cholesterol the major sterol component in mammalian membranes as well as a precursor for bile acid and steroid hormone synthesis. Cytochrome P450 monooxygenase that catalyzes the three-step oxidative removal of the 14alpha-methyl group (C-32) of sterols such as lanosterol (lanosta-8,24-dien-3beta-ol) and 24,25-dihydrolanosterol (DHL) in the form of formate, and converts the sterols to 4,4-dimethyl-5alpha-cholesta-8,14,24-trien-3beta-ol and 4,4-dimethyl-8,14-cholestadien-3beta-ol, respectively, which are intermediates of cholesterol biosynthesis. Can also demethylate substrates not intrinsic to mammals, such as eburicol (24-methylene-24,25-dihydrolanosterol), but at a lower rate than DHL. This chain is Lanosterol 14-alpha demethylase, found in Macaca fascicularis (Crab-eating macaque).